A 103-amino-acid chain; its full sequence is MTKSELIEILARRQAHLKSDDVDLAVKSLLEMMGQALSDGDRIEIRGFGSFSLHYRPPRLGRNPKTGESVALPGKHVPHFKPGKELRERVSSVVPVDVADTAD.

The disordered stretch occupies residues 62-81 (RNPKTGESVALPGKHVPHFK).

It belongs to the bacterial histone-like protein family. In terms of assembly, heterodimer of an alpha and a beta chain.

This protein is one of the two subunits of integration host factor, a specific DNA-binding protein that functions in genetic recombination as well as in transcriptional and translational control. This chain is Integration host factor subunit beta, found in Xanthomonas axonopodis pv. citri (strain 306).